Reading from the N-terminus, the 265-residue chain is 4-hydroxy-tetrahydrodipicolinate reductase (265 aa).

Residues 7–12 and Asp-33 each bind NAD(+); that span reads GASGRM. Arg-34 is a binding site for NADP(+). Residues 96 to 98 and 120 to 123 each bind NAD(+); these read GTT and AANM. His-153 functions as the Proton donor/acceptor in the catalytic mechanism. Residue His-154 participates in (S)-2,3,4,5-tetrahydrodipicolinate binding. The Proton donor role is filled by Lys-157. Position 163–164 (163–164) interacts with (S)-2,3,4,5-tetrahydrodipicolinate; the sequence is GT.

It belongs to the DapB family.

Its subcellular location is the cytoplasm. It carries out the reaction (S)-2,3,4,5-tetrahydrodipicolinate + NAD(+) + H2O = (2S,4S)-4-hydroxy-2,3,4,5-tetrahydrodipicolinate + NADH + H(+). The catalysed reaction is (S)-2,3,4,5-tetrahydrodipicolinate + NADP(+) + H2O = (2S,4S)-4-hydroxy-2,3,4,5-tetrahydrodipicolinate + NADPH + H(+). The protein operates within amino-acid biosynthesis; L-lysine biosynthesis via DAP pathway; (S)-tetrahydrodipicolinate from L-aspartate: step 4/4. In terms of biological role, catalyzes the conversion of 4-hydroxy-tetrahydrodipicolinate (HTPA) to tetrahydrodipicolinate. The protein is 4-hydroxy-tetrahydrodipicolinate reductase of Burkholderia vietnamiensis (strain G4 / LMG 22486) (Burkholderia cepacia (strain R1808)).